A 527-amino-acid polypeptide reads, in one-letter code: Probable malate:quinone oxidoreductase 2 (527 aa).

The protein belongs to the MQO family. FAD serves as cofactor.

It carries out the reaction (S)-malate + a quinone = a quinol + oxaloacetate. The protein operates within carbohydrate metabolism; tricarboxylic acid cycle; oxaloacetate from (S)-malate (quinone route): step 1/1. The sequence is that of Probable malate:quinone oxidoreductase 2 from Pseudomonas putida (strain ATCC 47054 / DSM 6125 / CFBP 8728 / NCIMB 11950 / KT2440).